A 629-amino-acid polypeptide reads, in one-letter code: tRNA uridine 5-carboxymethylaminomethyl modification enzyme MnmG (629 aa).

13 to 18 (GGGHAG) is an FAD binding site. Residue 273-287 (GPRYCPSIEDKVNRF) coordinates NAD(+).

This sequence belongs to the MnmG family. As to quaternary structure, homodimer. Heterotetramer of two MnmE and two MnmG subunits. FAD is required as a cofactor.

It is found in the cytoplasm. In terms of biological role, NAD-binding protein involved in the addition of a carboxymethylaminomethyl (cmnm) group at the wobble position (U34) of certain tRNAs, forming tRNA-cmnm(5)s(2)U34. The sequence is that of tRNA uridine 5-carboxymethylaminomethyl modification enzyme MnmG from Hahella chejuensis (strain KCTC 2396).